Here is a 249-residue protein sequence, read N- to C-terminus: uncharacterized protein (249 aa).

The protein localises to the cytoplasm. It is found in the nucleus. The protein resides in the nucleolus. This is an uncharacterized protein from Schizosaccharomyces pombe (strain 972 / ATCC 24843) (Fission yeast).